The chain runs to 426 residues: UDP-N-acetylglucosamine 1-carboxyvinyltransferase (426 aa).

Residue 22 to 23 (KN) coordinates phosphoenolpyruvate. Arg93 is a UDP-N-acetyl-alpha-D-glucosamine binding site. The active-site Proton donor is the Cys117. Cys117 carries the post-translational modification 2-(S-cysteinyl)pyruvic acid O-phosphothioketal. UDP-N-acetyl-alpha-D-glucosamine-binding positions include 162–165 (KVSV), Asp307, and Ile329.

Belongs to the EPSP synthase family. MurA subfamily.

The protein resides in the cytoplasm. It catalyses the reaction phosphoenolpyruvate + UDP-N-acetyl-alpha-D-glucosamine = UDP-N-acetyl-3-O-(1-carboxyvinyl)-alpha-D-glucosamine + phosphate. It functions in the pathway cell wall biogenesis; peptidoglycan biosynthesis. Its function is as follows. Cell wall formation. Adds enolpyruvyl to UDP-N-acetylglucosamine. This Haemophilus ducreyi (strain 35000HP / ATCC 700724) protein is UDP-N-acetylglucosamine 1-carboxyvinyltransferase.